A 953-amino-acid polypeptide reads, in one-letter code: GATA zinc finger domain-containing protein 14 (953 aa).

Polar residues predominate over residues 1 to 21; that stretch reads MFEKIPNQNSHSMGDNNTGYY. Disordered regions lie at residues 1–109 and 216–756; these read MFEK…SPNR and TYGS…TQPQ. The span at 22–89 shows a compositional bias: low complexity; sequence NNNNNNNNNN…QLPSPQLSQP (68 aa). Polar residues predominate over residues 90-109; sequence NSMNTTPNQTSPNLRSSPNR. Composition is skewed to low complexity over residues 219 to 330, 342 to 683, and 690 to 756; these read SSNT…VNAN, NIYN…PNSS, and GNNG…TQPQ. The segment at 893 to 918 adopts a GATA-type zinc-finger fold; sequence CTSCGTTQTPEWRKGPAGGKSLCNAC. The segment at 934–953 is disordered; that stretch reads KVETTSSPPSTSMNVVNLLN.

In Dictyostelium discoideum (Social amoeba), this protein is GATA zinc finger domain-containing protein 14 (gtaN).